The following is a 368-amino-acid chain: 4-hydroxy-3-methylbut-2-en-1-yl diphosphate synthase (flavodoxin) (368 aa).

The [4Fe-4S] cluster site is built by cysteine 268, cysteine 271, cysteine 303, and glutamate 310.

This sequence belongs to the IspG family. The cofactor is [4Fe-4S] cluster.

The catalysed reaction is (2E)-4-hydroxy-3-methylbut-2-enyl diphosphate + oxidized [flavodoxin] + H2O + 2 H(+) = 2-C-methyl-D-erythritol 2,4-cyclic diphosphate + reduced [flavodoxin]. It participates in isoprenoid biosynthesis; isopentenyl diphosphate biosynthesis via DXP pathway; isopentenyl diphosphate from 1-deoxy-D-xylulose 5-phosphate: step 5/6. Functionally, converts 2C-methyl-D-erythritol 2,4-cyclodiphosphate (ME-2,4cPP) into 1-hydroxy-2-methyl-2-(E)-butenyl 4-diphosphate. This Bacillus cytotoxicus (strain DSM 22905 / CIP 110041 / 391-98 / NVH 391-98) protein is 4-hydroxy-3-methylbut-2-en-1-yl diphosphate synthase (flavodoxin).